Here is a 160-residue protein sequence, read N- to C-terminus: SsrA-binding protein (160 aa).

The interval 134-160 (YDKRDTERERDSNRELHRAVRNKGKED) is disordered.

This sequence belongs to the SmpB family.

Its subcellular location is the cytoplasm. Required for rescue of stalled ribosomes mediated by trans-translation. Binds to transfer-messenger RNA (tmRNA), required for stable association of tmRNA with ribosomes. tmRNA and SmpB together mimic tRNA shape, replacing the anticodon stem-loop with SmpB. tmRNA is encoded by the ssrA gene; the 2 termini fold to resemble tRNA(Ala) and it encodes a 'tag peptide', a short internal open reading frame. During trans-translation Ala-aminoacylated tmRNA acts like a tRNA, entering the A-site of stalled ribosomes, displacing the stalled mRNA. The ribosome then switches to translate the ORF on the tmRNA; the nascent peptide is terminated with the 'tag peptide' encoded by the tmRNA and targeted for degradation. The ribosome is freed to recommence translation, which seems to be the essential function of trans-translation. The protein is SsrA-binding protein of Pseudomonas fluorescens (strain SBW25).